The chain runs to 670 residues: Probable beta-glucosidase N (670 aa).

Positions 1–21 (MHSNILPVLTSVATLLGLVQG) are cleaved as a signal peptide. N51 carries an N-linked (GlcNAc...) asparagine glycan. A disordered region spans residues 65–87 (FEPSDGVRSVQGSGKDYDNPAMR). N141 is a glycosylation site (N-linked (GlcNAc...) asparagine). D152 is a catalytic residue. N-linked (GlcNAc...) asparagine glycans are attached at residues N184, N248, N330, and N417.

It belongs to the glycosyl hydrolase 3 family.

It is found in the secreted. It carries out the reaction Hydrolysis of terminal, non-reducing beta-D-glucosyl residues with release of beta-D-glucose.. The protein operates within glycan metabolism; cellulose degradation. In terms of biological role, beta-glucosidases are one of a number of cellulolytic enzymes involved in the degradation of cellulosic biomass. Catalyzes the last step releasing glucose from the inhibitory cellobiose. The sequence is that of Probable beta-glucosidase N (bglN) from Emericella nidulans (strain FGSC A4 / ATCC 38163 / CBS 112.46 / NRRL 194 / M139) (Aspergillus nidulans).